Consider the following 233-residue polypeptide: Fibrillarin-like rRNA/tRNA 2'-O-methyltransferase (233 aa).

S-adenosyl-L-methionine-binding positions include 90-91 (TT), 109-110 (EF), 134-135 (DA), and 154-157 (DVAQ).

Belongs to the methyltransferase superfamily. Fibrillarin family. As to quaternary structure, interacts with nop5. Component of box C/D small ribonucleoprotein (sRNP) particles that contain rpl7ae, FlpA and nop5, plus a guide RNA.

Involved in pre-rRNA and tRNA processing. Utilizes the methyl donor S-adenosyl-L-methionine to catalyze the site-specific 2'-hydroxyl methylation of ribose moieties in rRNA and tRNA. Site specificity is provided by a guide RNA that base pairs with the substrate. Methylation occurs at a characteristic distance from the sequence involved in base pairing with the guide RNA. The polypeptide is Fibrillarin-like rRNA/tRNA 2'-O-methyltransferase (Aeropyrum pernix (strain ATCC 700893 / DSM 11879 / JCM 9820 / NBRC 100138 / K1)).